The primary structure comprises 68 residues: Arabinogalactan peptide 1 (68 aa).

Positions M1–A30 are cleaved as a signal peptide. S40 is lipidated: GPI-anchor amidated serine. A propeptide spans G41 to C68 (removed in mature form).

This sequence belongs to the AG-peptide AGP family. In terms of processing, O-glycosylated on hydroxyprolines; noncontiguous hydroxylproline residues are glycosylated with arabinogalactan. Expressed in roots, stems, flowers and seeds.

The protein localises to the vacuole. It is found in the aleurone grain membrane. Functionally, proteoglycan that seems to be implicated in diverse developmental roles such as differentiation, cell-cell recognition, embryogenesis and programmed cell death. This Oryza sativa subsp. japonica (Rice) protein is Arabinogalactan peptide 1 (AGPEP1).